A 151-amino-acid polypeptide reads, in one-letter code: SsrA-binding protein (151 aa).

It belongs to the SmpB family.

The protein localises to the cytoplasm. Required for rescue of stalled ribosomes mediated by trans-translation. Binds to transfer-messenger RNA (tmRNA), required for stable association of tmRNA with ribosomes. tmRNA and SmpB together mimic tRNA shape, replacing the anticodon stem-loop with SmpB. tmRNA is encoded by the ssrA gene; the 2 termini fold to resemble tRNA(Ala) and it encodes a 'tag peptide', a short internal open reading frame. During trans-translation Ala-aminoacylated tmRNA acts like a tRNA, entering the A-site of stalled ribosomes, displacing the stalled mRNA. The ribosome then switches to translate the ORF on the tmRNA; the nascent peptide is terminated with the 'tag peptide' encoded by the tmRNA and targeted for degradation. The ribosome is freed to recommence translation, which seems to be the essential function of trans-translation. This chain is SsrA-binding protein, found in Campylobacter fetus subsp. fetus (strain 82-40).